Here is a 141-residue protein sequence, read N- to C-terminus: VLSEADKSNVKGIWSKACCHLEDYGAETLERLFFVYPQTKIYFPHFDLTHNSAQIRGHGKKVFLALHDAVNHIDDLSGALSRLSDLHAHNLRVDPVNFKLLSQCVLVVFGVHHPGALTPEVHASLDKFLCAVSTVLTSKYR.

A Globin domain is found at 1 to 141 (VLSEADKSNV…VSTVLTSKYR (141 aa)). H58 contacts O2. H87 provides a ligand contact to heme b.

It belongs to the globin family. In terms of assembly, heterotetramer of two alpha chains and two beta chains. When oxygenated in vitro, exists virtually only in polymeric form. When deoxygenated, forms tetramers, octamers and larger polymers. In terms of tissue distribution, red blood cells.

Its function is as follows. Involved in oxygen transport from the lung to the various peripheral tissues. In Paleosuchus palpebrosus (Cuvier's smooth-fronted caiman), this protein is Hemoglobin subunit alpha.